Reading from the N-terminus, the 354-residue chain is Peripherin-2 (354 aa).

Over 1–24 (MALLKVKFNQKKRVKLAQGLWLMN) the chain is Cytoplasmic. A helical membrane pass occupies residues 25–43 (WFSVFAGIIVFSMGLFLKI). Topologically, residues 44 to 61 (ELRKRSEVMDNSESHFVP) are lumenal. A helical transmembrane segment spans residues 62 to 80 (NSLILMGILSCAFNGFAGK). At 81-99 (ICYDSLDPAKFAKWKPLLK) the chain is on the cytoplasmic side. The helical transmembrane segment at 100–123 (PYLALCFFFNILLFFVALICFLMR) threads the bilayer. Over 124-264 (GSLESTLAQG…LHYYSSMMSS (141 aa)) the chain is Lumenal. N-linked (GlcNAc...) asparagine glycosylation is present at Asn229. The chain crosses the membrane as a helical span at residues 265–290 (MGAVVLLVWLFEMSVMVGLRLLHTSL). Over 291–354 (ESIANPEDPE…GKTPAITTVS (64 aa)) the chain is Cytoplasmic. A disordered region spans residues 335–354 (GAEGAEGEEAGKTPAITTVS).

It belongs to the PRPH2/ROM1 family. As to quaternary structure, homodimer; disulfide-linked.

The protein localises to the membrane. Its function is as follows. May be involved in the morphogenesis of retina outer segment disks and the development and maintenance of the retina ultrastructure. In Gallus gallus (Chicken), this protein is Peripherin-2 (PRPH2).